The following is a 222-amino-acid chain: DnaJ homolog subfamily B member 9 (222 aa).

An N-terminal signal peptide occupies residues 1-23 (MATPQSVFVFAICILMITELILA). The 65-residue stretch at 26–90 (NYYDILGVPK…NRRKEYDIIG (65 aa)) folds into the J domain. The segment at 91–222 (HSAFTNGKGQ…VTTYTDCSGQ (132 aa)) is divergent targeting domain. The residue at position 133 (Ser-133) is a Phosphoserine.

In terms of assembly, interacts with HSPA5/BiP; interaction is direct. Interacts with ERN1/IRE1 (via the luminal region). Interacts with DERL1.

It is found in the endoplasmic reticulum lumen. Its function is as follows. Co-chaperone for Hsp70 protein HSPA5/BiP that acts as a key repressor of the ERN1/IRE1-mediated unfolded protein response (UPR). J domain-containing co-chaperones stimulate the ATPase activity of Hsp70 proteins and are required for efficient substrate recognition by Hsp70 proteins. In the unstressed endoplasmic reticulum, interacts with the luminal region of ERN1/IRE1 and selectively recruits HSPA5/BiP: HSPA5/BiP disrupts the dimerization of the active ERN1/IRE1 luminal region, thereby inactivating ERN1/IRE1. Also involved in endoplasmic reticulum-associated degradation (ERAD) of misfolded proteins. Required for survival of B-cell progenitors and normal antibody production. This Rattus norvegicus (Rat) protein is DnaJ homolog subfamily B member 9.